The chain runs to 493 residues: Ribose import ATP-binding protein RbsA (493 aa).

2 consecutive ABC transporter domains span residues 5 to 241 and 252 to 491; these read LKIS…VGRR and EKGE…AAAI. 37-44 contributes to the ATP binding site; sequence GENGAGKS.

Belongs to the ABC transporter superfamily. Ribose importer (TC 3.A.1.2.1) family. The complex is composed of an ATP-binding protein (RbsA), two transmembrane proteins (RbsC) and a solute-binding protein (RbsB).

Its subcellular location is the cell inner membrane. It carries out the reaction D-ribose(out) + ATP + H2O = D-ribose(in) + ADP + phosphate + H(+). Part of the ABC transporter complex RbsABC involved in ribose import. Responsible for energy coupling to the transport system. This is Ribose import ATP-binding protein RbsA from Haemophilus influenzae (strain 86-028NP).